The sequence spans 461 residues: Vitamin K-dependent protein C (461 aa).

A signal peptide spans 1 to 18; that stretch reads MWQLTSLLLFVATWGISG. Threonine 19 carries an O-linked (GalNAc...) threonine glycan. Residues 19-42 constitute a propeptide that is removed on maturation; it reads TPAPLDSVFSSSERAHQVLRIRKR. One can recognise a Gla domain in the interval 43-88; that stretch reads ANSFLEELRHSSLERECIEEICDFEEAKEIFQNVDDTLAFWSKHVD. Residues glutamate 48, glutamate 49, glutamate 56, glutamate 58, glutamate 61, glutamate 62, glutamate 67, glutamate 68, and glutamate 71 each carry the 4-carboxyglutamate modification. A disulfide bridge connects residues cysteine 59 and cysteine 64. Intrachain disulfides connect cysteine 92–cysteine 111, cysteine 101–cysteine 106, cysteine 105–cysteine 120, and cysteine 122–cysteine 131. EGF-like domains follow at residues 97–132 and 136–176; these read LEHP…RFCQ and SFLN…LQCH. (3R)-3-hydroxyaspartate is present on aspartate 113. N-linked (GlcNAc...) asparagine glycosylation is present at asparagine 139. 5 disulfide bridges follow: cysteine 140-cysteine 151, cysteine 147-cysteine 160, cysteine 162-cysteine 175, cysteine 183-cysteine 319, and cysteine 238-cysteine 254. The Peptidase S1 domain maps to 212-450; sequence LIDGKMTRRG…YLDWIHGHIR (239 aa). Histidine 253 serves as the catalytic Charge relay system. An N-linked (GlcNAc...) asparagine glycan is attached at asparagine 290. Catalysis depends on aspartate 299, which acts as the Charge relay system. Serine 347 carries the phosphoserine; by FAM20C modification. Asparagine 355 carries an N-linked (GlcNAc...) asparagine glycan. Asparagine 371 carries an N-linked (GlcNAc...) asparagine; atypical; partial glycan. 2 disulfides stabilise this stretch: cysteine 373–cysteine 387 and cysteine 398–cysteine 426. Residue serine 402 is the Charge relay system of the active site.

This sequence belongs to the peptidase S1 family. As to quaternary structure, synthesized as a single chain precursor, which is cleaved into a light chain and a heavy chain held together by a disulfide bond. The enzyme is then activated by thrombin, which cleaves a tetradecapeptide from the amino end of the heavy chain; this reaction, which occurs at the surface of endothelial cells, is strongly promoted by thrombomodulin. Interacts (activated) with iripin-8, a serine protease inhibitor from Ixodes ricinus saliva. Post-translationally, the vitamin K-dependent, enzymatic carboxylation of some Glu residues allows the modified protein to bind calcium. N- and O-glycosylated. Partial (70%) N-glycosylation of Asn-371 with an atypical N-X-C site produces a higher molecular weight form referred to as alpha. The lower molecular weight form, not N-glycosylated at Asn-371, is beta. O-glycosylated with core 1 or possibly core 8 glycans. In terms of processing, the iron and 2-oxoglutarate dependent 3-hydroxylation of aspartate and asparagine is (R) stereospecific within EGF domains. Post-translationally, may be phosphorylated on a Ser or Thr in a region (AA 25-30) of the propeptide. As to expression, plasma; synthesized in the liver.

Its subcellular location is the secreted. It is found in the golgi apparatus. The protein resides in the endoplasmic reticulum. It catalyses the reaction Degradation of blood coagulation factors Va and VIIIa.. In terms of biological role, protein C is a vitamin K-dependent serine protease that regulates blood coagulation by inactivating factors Va and VIIIa in the presence of calcium ions and phospholipids. Exerts a protective effect on the endothelial cell barrier function. The protein is Vitamin K-dependent protein C (PROC) of Homo sapiens (Human).